The sequence spans 78 residues: MERSSNEVSNPVAGNFVFPSNATFGMGDRVRKKSGAAWQGQIVGWYCTNLTPEGYAVESEAHPGSVQIYPVAALERIN.

NADP(+) is bound by residues 32-36 (KKSGA) and 66-69 (VQIY). Residue isoleucine 68 participates in substrate binding.

As to quaternary structure, homotetramer.

It catalyses the reaction (6S)-5,6,7,8-tetrahydrofolate + NADP(+) = 7,8-dihydrofolate + NADPH + H(+). It participates in cofactor biosynthesis; tetrahydrofolate biosynthesis; 5,6,7,8-tetrahydrofolate from 7,8-dihydrofolate: step 1/1. Functionally, key enzyme in folate metabolism. Catalyzes an essential reaction for de novo glycine and purine synthesis, and for DNA precursor synthesis. This chain is Dihydrofolate reductase type 2, found in Escherichia coli.